The chain runs to 594 residues: Probable acyl-CoA dehydrogenase (594 aa).

The active-site Proton acceptor is the glutamate 405.

Belongs to the acyl-CoA dehydrogenase family. It depends on FAD as a cofactor.

The enzyme catalyses a 2,3-saturated acyl-CoA + A = a 2,3-dehydroacyl-CoA + AH2. It participates in lipid metabolism; fatty acid beta-oxidation. In terms of biological role, involved in the degradation of long-chain fatty acids. This chain is Probable acyl-CoA dehydrogenase (fadE), found in Bacillus subtilis (strain 168).